The following is a 312-amino-acid chain: tRNA dimethylallyltransferase (312 aa).

11–18 contacts ATP; sequence GLTATGKT. Substrate is bound at residue 13–18; the sequence is TATGKT. Residues 36-39 are interaction with substrate tRNA; sequence DSMC.

The protein belongs to the IPP transferase family. Monomer. Mg(2+) serves as cofactor.

It catalyses the reaction adenosine(37) in tRNA + dimethylallyl diphosphate = N(6)-dimethylallyladenosine(37) in tRNA + diphosphate. Its function is as follows. Catalyzes the transfer of a dimethylallyl group onto the adenine at position 37 in tRNAs that read codons beginning with uridine, leading to the formation of N6-(dimethylallyl)adenosine (i(6)A). The polypeptide is tRNA dimethylallyltransferase (Caldicellulosiruptor bescii (strain ATCC BAA-1888 / DSM 6725 / KCTC 15123 / Z-1320) (Anaerocellum thermophilum)).